Here is a 335-residue protein sequence, read N- to C-terminus: Cytoskeleton protein RodZ (335 aa).

The Cytoplasmic portion of the chain corresponds to 1–111 (MNTEATHDQN…LGKRRKKRDG (111 aa)). One can recognise an HTH cro/C1-type domain in the interval 19–71 (LRNAREQLGLSQQAVAERLCLKVSTVRDIEEDKAPADLASTFLRGYIRSYARL). The segment at residues 30–49 (QQAVAERLCLKVSTVRDIEE) is a DNA-binding region (H-T-H motif). Residues 112–132 (WLMTFTWLVLFVVIGLSGAWW) form a helical; Signal-anchor for type II membrane protein membrane-spanning segment. At 133-335 (WQDHKAQQEE…TLNAEQSPAQ (203 aa)) the chain is on the periplasmic side. A compositionally biased stretch (polar residues) spans 148–164 (DQSSAELNNNQSQSVPL). Positions 148-244 (DQSSAELNNN…PLPTDQAGVT (97 aa)) are disordered. Composition is skewed to low complexity over residues 165–205 (DTST…DPQQ) and 217–239 (DTAATPAPAATTTPDSAAPLPTD).

The protein belongs to the RodZ family.

The protein resides in the cell inner membrane. Functionally, cytoskeletal protein that is involved in cell-shape control through regulation of the length of the long axis. In Escherichia coli O81 (strain ED1a), this protein is Cytoskeleton protein RodZ.